A 392-amino-acid polypeptide reads, in one-letter code: tRNA (guanine(6)-N2)-methyltransferase (392 aa).

The THUMP domain occupies 73–183 (SAIPLLNHFS…DSELFVGVDT (111 aa)). S-adenosyl-L-methionine-binding positions include 199 to 203 (HPAHL), 230 to 232 (SGT), Glu275, 303 to 304 (DA), and Asn317.

This sequence belongs to the methyltransferase superfamily.

It localises to the cytoplasm. The catalysed reaction is guanosine(6) in tRNA + S-adenosyl-L-methionine = N(2)-methylguanosine(6) in tRNA + S-adenosyl-L-homocysteine + H(+). Its function is as follows. S-adenosyl-L-methionine-dependent methyltransferase that catalyzes the methylation of the guanosine nucleotide at position 6 (m2G6) in tRNA. In Archaeoglobus fulgidus (strain ATCC 49558 / DSM 4304 / JCM 9628 / NBRC 100126 / VC-16), this protein is tRNA (guanine(6)-N2)-methyltransferase.